A 367-amino-acid chain; its full sequence is Ribosomal RNA large subunit methyltransferase M (367 aa).

S-adenosyl-L-methionine-binding positions include Ser-189, 222-225, Asp-241, Asp-261, and Asp-278; that span reads CPGG. The Proton acceptor role is filled by Lys-307.

Belongs to the class I-like SAM-binding methyltransferase superfamily. RNA methyltransferase RlmE family. RlmM subfamily. As to quaternary structure, monomer.

It is found in the cytoplasm. The catalysed reaction is cytidine(2498) in 23S rRNA + S-adenosyl-L-methionine = 2'-O-methylcytidine(2498) in 23S rRNA + S-adenosyl-L-homocysteine + H(+). In terms of biological role, catalyzes the 2'-O-methylation at nucleotide C2498 in 23S rRNA. This chain is Ribosomal RNA large subunit methyltransferase M, found in Shewanella denitrificans (strain OS217 / ATCC BAA-1090 / DSM 15013).